Consider the following 143-residue polypeptide: 5-hydroxymethyl-dUMP N-hydrolase (143 aa).

Positions 7, 9, 10, 11, 77, 79, 83, and 107 each coordinate 5-hydroxymethyl-dUMP.

The protein belongs to the 2'-deoxynucleoside 5'-phosphate N-hydrolase 1 family. As to quaternary structure, monomer and homodimer.

It localises to the cytoplasm. Its subcellular location is the nucleus. The enzyme catalyses 5-hydroxymethyl-dUMP + H2O = 5-hydroxymethyluracil + 2-deoxy-D-ribose 5-phosphate. Its function is as follows. Part of a nucleotide salvage pathway that eliminates epigenetically modified 5-hydroxymethyl-dCMP (hmdCMP) in a two-step process entailing deamination to cytotoxic 5-hydroxymethyl-dUMP (hmdUMP), followed by its hydrolysis into 5-hydroxymethyluracil (hmU) and 2-deoxy-D-ribose 5-phosphate (deoxyribosephosphate). In Danio rerio (Zebrafish), this protein is 5-hydroxymethyl-dUMP N-hydrolase (dnph1).